We begin with the raw amino-acid sequence, 467 residues long: L-seryl-tRNA(Sec) selenium transferase (467 aa).

Residue lysine 298 is modified to N6-(pyridoxal phosphate)lysine.

This sequence belongs to the SelA family. It depends on pyridoxal 5'-phosphate as a cofactor.

Its subcellular location is the cytoplasm. It catalyses the reaction L-seryl-tRNA(Sec) + selenophosphate + H(+) = L-selenocysteinyl-tRNA(Sec) + phosphate. It functions in the pathway aminoacyl-tRNA biosynthesis; selenocysteinyl-tRNA(Sec) biosynthesis; selenocysteinyl-tRNA(Sec) from L-seryl-tRNA(Sec) (bacterial route): step 1/1. In terms of biological role, converts seryl-tRNA(Sec) to selenocysteinyl-tRNA(Sec) required for selenoprotein biosynthesis. This Alkaliphilus oremlandii (strain OhILAs) (Clostridium oremlandii (strain OhILAs)) protein is L-seryl-tRNA(Sec) selenium transferase.